An 87-amino-acid polypeptide reads, in one-letter code: UPF0250 protein BCc_307 (87 aa).

The protein belongs to the UPF0250 family.

The sequence is that of UPF0250 protein BCc_307 from Buchnera aphidicola subsp. Cinara cedri (strain Cc).